The chain runs to 148 residues: Small ribosomal subunit protein bS16 (148 aa).

The segment at 107–148 (AAARAAAGAEDRPATTPKKAKKAASADGADAPAADAPTAAGQ) is disordered. Over residues 129–148 (AASADGADAPAADAPTAAGQ) the composition is skewed to low complexity.

Belongs to the bacterial ribosomal protein bS16 family.

In Frankia alni (strain DSM 45986 / CECT 9034 / ACN14a), this protein is Small ribosomal subunit protein bS16.